Consider the following 797-residue polypeptide: Outer membrane protein assembly factor BamA (797 aa).

A signal peptide spans 1–19 (MKKLLIASLLFGTTTTVFA). POTRA domains lie at 22 to 89 (FVAK…VVAK), 90 to 170 (SIIS…INED), 173 to 259 (AKLA…VNEG), 262 to 341 (YDLR…VDAG), and 344 to 418 (LTVR…VKER).

This sequence belongs to the BamA family. As to quaternary structure, part of the Bam complex.

It is found in the cell outer membrane. Part of the outer membrane protein assembly complex, which is involved in assembly and insertion of beta-barrel proteins into the outer membrane. In Haemophilus influenzae, this protein is Outer membrane protein assembly factor BamA.